A 134-amino-acid polypeptide reads, in one-letter code: Small ribosomal subunit protein uS11 (134 aa).

This sequence belongs to the universal ribosomal protein uS11 family. As to quaternary structure, part of the 30S ribosomal subunit. Interacts with proteins S7 and S18. Binds to IF-3.

Functionally, located on the platform of the 30S subunit, it bridges several disparate RNA helices of the 16S rRNA. Forms part of the Shine-Dalgarno cleft in the 70S ribosome. In Corynebacterium diphtheriae (strain ATCC 700971 / NCTC 13129 / Biotype gravis), this protein is Small ribosomal subunit protein uS11.